A 1073-amino-acid chain; its full sequence is Ubiquitin carboxyl-terminal hydrolase 53 (1073 aa).

Residues 30-351 (KGLLNEPGQN…QPLLLFYANP (322 aa)) form the USP domain. The active-site Nucleophile is the Cys-41. 12 residues coordinate Zn(2+): His-66, Cys-68, Cys-73, Cys-76, His-132, Cys-144, Cys-149, His-152, Cys-165, Cys-168, Cys-224, and Cys-228. His-301 (proton acceptor) is an active-site residue. Disordered stretches follow at residues 391–437 (LKEN…HIDQ) and 485–636 (LSHF…PKQK). Residues 407–418 (KFPTDNISSSNR) show a composition bias toward polar residues. Residues 524 to 541 (QSRASAQIISSSKSQILA) show a composition bias toward low complexity. Positions 553–563 (DNGTGYDTDSS) are enriched in polar residues. Positions 612-627 (NISNKPKSSKDPSFSN) are enriched in low complexity.

Belongs to the peptidase C19 family. Interacts (via the C-terminal region) with the heterodimer TJP1:TJP2. As to expression, expressed predominantly in skeletal muscle and heart.

The protein resides in the cell junction. It localises to the tight junction. The catalysed reaction is Thiol-dependent hydrolysis of ester, thioester, amide, peptide and isopeptide bonds formed by the C-terminal Gly of ubiquitin (a 76-residue protein attached to proteins as an intracellular targeting signal).. Its function is as follows. Deubiquitinase that mediates 'Lys-63'-linked deubiquitination of tight junction proteins, such as MARVELD2 and LSR, and which is involved in the survival of auditory hair cells and hearing. Specifically cleaves 'Lys-63'-linked polyubiquitin chains composed of at least 3 ubiquitin molecules, while it is not able to deubiquitinate substrates with shorter ubiquitin chains: recognizes ubiquitin chain in position S2 and catalyzes en bloc cleavage of polyubiquitin chains from substrate proteins. Probably acts by modulating the barrier properties and mechanical stability of tight junctions via deubiquitination of MARVELD2 and LSR. This is Ubiquitin carboxyl-terminal hydrolase 53 from Homo sapiens (Human).